The primary structure comprises 362 residues: Peptide chain release factor 1 (362 aa).

Residue glutamine 237 is modified to N5-methylglutamine.

The protein belongs to the prokaryotic/mitochondrial release factor family. Post-translationally, methylated by PrmC. Methylation increases the termination efficiency of RF1.

Its subcellular location is the cytoplasm. Functionally, peptide chain release factor 1 directs the termination of translation in response to the peptide chain termination codons UAG and UAA. This chain is Peptide chain release factor 1, found in Vibrio campbellii (strain ATCC BAA-1116).